The primary structure comprises 193 residues: DNA damage-inducible transcript 4-like protein (193 aa).

This sequence belongs to the DDIT4 family. In terms of tissue distribution, up-regulated in atherosclerotic plaques relative to healthy segments of the same artery.

It is found in the cytoplasm. Inhibits cell growth by regulating the TOR signaling pathway upstream of the TSC1-TSC2 complex and downstream of AKT1. This Homo sapiens (Human) protein is DNA damage-inducible transcript 4-like protein (DDIT4L).